The following is a 578-amino-acid chain: Malonate--CoA ligase ACSF3, mitochondrial (578 aa).

The N-terminal 19 residues, 1–19, are a transit peptide targeting the mitochondrion; the sequence is MRVGAFLGRSLFSCSHVRG. Residue 205–213 participates in ATP binding; it reads TSGTTGRPK. A disordered region spans residues 394–413; the sequence is QNPRKEGTSYTTHAQGDSTG. Positions 459, 473, and 565 each coordinate ATP.

Belongs to the ATP-dependent AMP-binding enzyme family.

It is found in the mitochondrion. The catalysed reaction is tetracosanoate + ATP + CoA = tetracosanoyl-CoA + AMP + diphosphate. It catalyses the reaction malonate + ATP + CoA = malonyl-CoA + AMP + diphosphate. In terms of biological role, catalyzes the initial reaction in intramitochondrial fatty acid synthesis, by activating malonate and methylmalonate, but not acetate, into their respective CoA thioester. May have some preference toward very-long-chain substrates. This Xenopus laevis (African clawed frog) protein is Malonate--CoA ligase ACSF3, mitochondrial.